Reading from the N-terminus, the 171-residue chain is Disulfide bond formation protein B (171 aa).

The Cytoplasmic portion of the chain corresponds to 1–8; the sequence is MQWSYRFV. A helical transmembrane segment spans residues 9–25; sequence SGLLVLASIVGMTFALY. Topologically, residues 26 to 43 are periplasmic; the sequence is LEHFKGLEPCPLCIFQRV. A disulfide bridge connects residues cysteine 35 and cysteine 38. A helical transmembrane segment spans residues 44-60; sequence GLMAMGIVALIAFLHNP. Residues 61–67 are Cytoplasmic-facing; the sequence is VSNAFKR. Residues 68–85 traverse the membrane as a helical segment; the sequence is VYAFLATLGILWSVGVAI. The Periplasmic portion of the chain corresponds to 86-142; sequence RHVWLQTLPPDQVPSCGPGLNYLLDALPLKTVLQQVLQGSGECAAIHWTFLGQSLPV. A disulfide bond links cysteine 101 and cysteine 128. Residues 143 to 161 form a helical membrane-spanning segment; the sequence is WSLAYFSLILLVCVWQLLR. Residues 162–171 are Cytoplasmic-facing; the sequence is RYPVIVTKKK.

The protein belongs to the DsbB family.

The protein resides in the cell inner membrane. In terms of biological role, required for disulfide bond formation in some periplasmic proteins. Acts by oxidizing the DsbA protein. The chain is Disulfide bond formation protein B from Acinetobacter baylyi (strain ATCC 33305 / BD413 / ADP1).